The following is a 1375-amino-acid chain: BNI1-related protein 1 (1375 aa).

Residues 94-490 enclose the GBD/FH3 domain; it reads CMPQDASLVE…YLIDSFQVST (397 aa). Positions 520–601 form a coiled coil; it reads QSDEIARRAV…ITTHQRLYDQ (82 aa). Ser621 is modified (phosphoserine). In terms of domain architecture, FH1 spans 659 to 851; that stretch reads SSYLTDANNE…LVTPPAPPLP (193 aa). The disordered stretch occupies residues 661–684; that stretch reads YLTDANNENESQNESEDKSKDSLF. Ser751 is modified (phosphoserine). Disordered stretches follow at residues 764-785, 817-839, and 1285-1309; these read KLPQ…QSLL, AVPP…GPSN, and KSLL…GEKV. 2 stretches are compositionally biased toward pro residues: residues 767–781 and 818–828; these read QLPP…PPLP and VPPPPPPPPLP. The FH2 domain occupies 868–1290; sequence DLKPPPTEKR…YEQRKSLLDM (423 aa). Residues 1302 to 1336 form the DAD domain; it reads DENDGEKVNRDAVDLLISKLREVKKDPEPLRRRKS.

Belongs to the formin homology family. BNI1 subfamily. As to quaternary structure, interacts with profilin at the FH1 domain.

In terms of biological role, may organize microtubules by mediating spindle positioning and movement in the budding process. Potential target of the RHO family members. The chain is BNI1-related protein 1 (BNR1) from Saccharomyces cerevisiae (strain ATCC 204508 / S288c) (Baker's yeast).